Here is a 352-residue protein sequence, read N- to C-terminus: PhoH-like protein (352 aa).

The disordered stretch occupies residues 1–21 (MTSRETRAADAAGARQADAQV). Residues 9 to 20 (ADAAGARQADAQ) show a composition bias toward low complexity. 150–157 (GPAGTGKT) contributes to the ATP binding site.

This sequence belongs to the PhoH family.

It is found in the cytoplasm. This chain is PhoH-like protein, found in Mycobacterium bovis (strain ATCC BAA-935 / AF2122/97).